The sequence spans 973 residues: FHF complex subunit HOOK-interacting protein 1B (973 aa).

Disordered regions lie at residues 466–493, 510–547, and 573–647; these read SSPSRPEHASWARGPGSPSVDSSSVVTV, SLGGSESPAPAPRSPGLATSPASSPGRRPSPVEEPGEL, and SAPY…EGAK. Residue Ser467 is modified to Phosphoserine. A compositionally biased stretch (low complexity) spans 482–493; it reads SPSVDSSSVVTV. Residues Ser510, Ser523, Ser529, and Ser533 each carry the phosphoserine modification. 2 stretches are compositionally biased toward low complexity: residues 529-538 and 622-639; these read SPASSPGRRP and GARESLGHLPPPQLNGLP. Phosphoserine is present on residues Ser859 and Ser898.

This sequence belongs to the FHIP family. Component of the FTS/Hook/FHIP complex (FHF complex), composed of AKTIP/FTS, FHIP1B, and one or more members of the Hook family of proteins HOOK1, HOOK2, and HOOK3. The FHF complex associates with the homotypic vesicular sorting complex (the HOPS complex).

Its function is as follows. Component of the FTS/Hook/FHIP complex (FHF complex). The FHF complex may function to promote vesicle trafficking and/or fusion via the homotypic vesicular protein sorting complex (the HOPS complex). FHF complex promotes the distribution of AP-4 complex to the perinuclear area of the cell. This chain is FHF complex subunit HOOK-interacting protein 1B (FHIP1B), found in Bos taurus (Bovine).